Consider the following 552-residue polypeptide: Indole-3-pyruvate decarboxylase (552 aa).

E52 contributes to the thiamine diphosphate binding site. The thiamine pyrophosphate binding stretch occupies residues 385-466; that stretch reads TSAFGAIDLR…ILVLNNEGYT (82 aa). 2 residues coordinate Mg(2+): D435 and N462.

The protein belongs to the TPP enzyme family. Homotetramer. A metal cation serves as cofactor. Requires thiamine diphosphate as cofactor.

It carries out the reaction indole-3-pyruvate + H(+) = indole-3-acetaldehyde + CO2. It participates in plant hormone metabolism; auxin biosynthesis. The polypeptide is Indole-3-pyruvate decarboxylase (ipdC) (Enterobacter cloacae).